Reading from the N-terminus, the 435-residue chain is GTPase Obg (435 aa).

The Obg domain maps to 1-158 (MFIDRAKIYV…RWLYLELKLL (158 aa)). The OBG-type G domain maps to 159–328 (ADVGLVGLPN…LLELMEKYVR (170 aa)). GTP is bound by residues 165 to 172 (GLPNAGKS), 190 to 194 (FTTKT), 211 to 214 (DIPG), 280 to 283 (NKID), and 309 to 311 (SAK). Mg(2+) is bound by residues serine 172 and threonine 192. The region spanning 343 to 426 (IQETKEGRVE…IGDYIFKYNA (84 aa)) is the OCT domain.

This sequence belongs to the TRAFAC class OBG-HflX-like GTPase superfamily. OBG GTPase family. As to quaternary structure, monomer. Requires Mg(2+) as cofactor.

The protein localises to the cytoplasm. In terms of biological role, an essential GTPase which binds GTP, GDP and possibly (p)ppGpp with moderate affinity, with high nucleotide exchange rates and a fairly low GTP hydrolysis rate. Plays a role in control of the cell cycle, stress response, ribosome biogenesis and in those bacteria that undergo differentiation, in morphogenesis control. The polypeptide is GTPase Obg (Dictyoglomus thermophilum (strain ATCC 35947 / DSM 3960 / H-6-12)).